Consider the following 156-residue polypeptide: SsrA-binding protein (156 aa).

Belongs to the SmpB family.

The protein resides in the cytoplasm. Functionally, required for rescue of stalled ribosomes mediated by trans-translation. Binds to transfer-messenger RNA (tmRNA), required for stable association of tmRNA with ribosomes. tmRNA and SmpB together mimic tRNA shape, replacing the anticodon stem-loop with SmpB. tmRNA is encoded by the ssrA gene; the 2 termini fold to resemble tRNA(Ala) and it encodes a 'tag peptide', a short internal open reading frame. During trans-translation Ala-aminoacylated tmRNA acts like a tRNA, entering the A-site of stalled ribosomes, displacing the stalled mRNA. The ribosome then switches to translate the ORF on the tmRNA; the nascent peptide is terminated with the 'tag peptide' encoded by the tmRNA and targeted for degradation. The ribosome is freed to recommence translation, which seems to be the essential function of trans-translation. Required for trans-translation. Probably required for sporulation; deletion of the gene for tmRNA impairs sporulation via its effect on trans-translation, and as smpB is required for trans-translation under non-stress conditions, it is also probably required during sporulation. The sequence is that of SsrA-binding protein from Bacillus subtilis (strain 168).